We begin with the raw amino-acid sequence, 395 residues long: Acetate kinase (395 aa).

Residue Asn-7 coordinates Mg(2+). Lys-14 lines the ATP pocket. Position 88 (Arg-88) interacts with substrate. Asp-145 (proton donor/acceptor) is an active-site residue. Residues 205 to 209 (HLGNG), 279 to 281 (DFR), and 327 to 331 (GIGEN) each bind ATP. Residue Glu-381 participates in Mg(2+) binding.

The protein belongs to the acetokinase family. Homodimer. The cofactor is Mg(2+). Requires Mn(2+) as cofactor.

It is found in the cytoplasm. The catalysed reaction is acetate + ATP = acetyl phosphate + ADP. It participates in metabolic intermediate biosynthesis; acetyl-CoA biosynthesis; acetyl-CoA from acetate: step 1/2. Catalyzes the formation of acetyl phosphate from acetate and ATP. Can also catalyze the reverse reaction. The sequence is that of Acetate kinase from Campylobacter jejuni subsp. jejuni serotype O:6 (strain 81116 / NCTC 11828).